A 735-amino-acid chain; its full sequence is Protostadienol synthase helA (735 aa).

A PFTB 1 repeat occupies 132 to 173; that stretch reads KQEMCRYLLNVVNEDGGWGLFIQSPSTVFGTVMNYCMLRILG. Asp-463 serves as the catalytic Proton donor. 3 PFTB repeats span residues 490 to 531, 567 to 607, and 616 to 663; these read LQQA…YENV, LSRS…ACMG, and CQRA…AVIG.

This sequence belongs to the terpene cyclase/mutase family.

It carries out the reaction (S)-2,3-epoxysqualene = (17Z)-protosta-17(20),24-dien-3beta-ol. It participates in mycotoxin biosynthesis. In terms of biological role, protostadienol synthase; part of the gene cluster that mediates the biosynthesis of helvolic acid, an antibacterial nortriterpenoid. Protostadienol synthase helA cyclizes (3S)-oxidosqualene to (17Z)-protosta-17(20),24-dien-3-beta-ol (protostadienol). The synthesis of protostadienol is followed by several steps of monooxygenation, dehydrogenation, and acyl transfer to yield the final helvolic acid. Following the cyclization to the tetracyclic protostadienol by helA, cytochrome P450 monooxygenases helB1-mediated and helB2-mediated oxidation at C-4 and C-16, acyltransferase helD2-dependent acetylation of 16-OH, oxidation of C-21 by cytochrome P450 monooxygenase helB4, and short chain dehydrogenase helC-dependent oxidative decarboxylation yield the fusidane skeleton. This intermediate is further modified in three additional steps mediated by the cytochrome P450 monooxygenase helB3, the acyltransferase helD1, and the 3-ketosteroid 1-dehydrogenase helE to give helvolic acid. Compared with the late stages in the biosynthesis of helvolic acid, enzymes involved in the early stage modifications act in a relatively strict order. The hydroxylation of C-16 by helB1 and subsequent acetylation by helD2 should occur before the helB3-mediated oxidation of C-21. C-4 demethylation in fusidane-type antibiotics proceeds in an unusual manner though it is also achieved by oxidative decarboxylation. The methyl group at C-4 beta position is oxidized by helB1 and subsequently removed by the short chain dehydrogenase helC. This chain is Protostadienol synthase helA, found in Aspergillus fumigatus (strain ATCC MYA-4609 / CBS 101355 / FGSC A1100 / Af293) (Neosartorya fumigata).